Reading from the N-terminus, the 113-residue chain is Protein SPIRAL1-like 1 (113 aa).

Over residues 1–12 the composition is skewed to gly residues; that stretch reads MGRGVSVGGGQS. Residues 1 to 50 form a disordered region; it reads MGRGVSVGGGQSSLGYLFGSGEAPKPAINNAPAPSSETLPISADPSPKHV. Positions 23-34 are enriched in low complexity; the sequence is APKPAINNAPAP. Position 69 is a phosphoserine (serine 69). Positions 79 to 113 are disordered; sequence QNTGNFLTDRPSTKVHAAPGGGSSLDYLFGGGGSN. Gly residues predominate over residues 97 to 113; the sequence is PGGGSSLDYLFGGGGSN.

This sequence belongs to the SPIRAL1 family. In terms of tissue distribution, detected in pollen of mature flowers.

Acts redundantly with SPR1 in maintaining the cortical microtubules organization essential for anisotropic cell growth. The polypeptide is Protein SPIRAL1-like 1 (SP1L1) (Arabidopsis thaliana (Mouse-ear cress)).